Reading from the N-terminus, the 209-residue chain is dITP/XTP pyrophosphatase (209 aa).

7–12 (TGNKGK) serves as a coordination point for substrate. Catalysis depends on Asp73, which acts as the Proton acceptor. Asp73 is a Mg(2+) binding site. Residues Ser74, 155-158 (FGYD), Lys178, and 183-184 (HR) each bind substrate.

This sequence belongs to the HAM1 NTPase family. Homodimer. It depends on Mg(2+) as a cofactor.

It carries out the reaction XTP + H2O = XMP + diphosphate + H(+). The catalysed reaction is dITP + H2O = dIMP + diphosphate + H(+). It catalyses the reaction ITP + H2O = IMP + diphosphate + H(+). Pyrophosphatase that catalyzes the hydrolysis of nucleoside triphosphates to their monophosphate derivatives, with a high preference for the non-canonical purine nucleotides XTP (xanthosine triphosphate), dITP (deoxyinosine triphosphate) and ITP. Seems to function as a house-cleaning enzyme that removes non-canonical purine nucleotides from the nucleotide pool, thus preventing their incorporation into DNA/RNA and avoiding chromosomal lesions. The chain is dITP/XTP pyrophosphatase from Sulfurovum sp. (strain NBC37-1).